A 475-amino-acid polypeptide reads, in one-letter code: AAA-ATPase At1g43910 (475 aa).

The chain crosses the membrane as a helical span at residues 11–28; it reads VSAVFSLYTSFSAITMLF. The residue at position 85 (threonine 85) is a Phosphothreonine. Position 246 to 253 (246 to 253) interacts with ATP; it reads GPPGTGKS. Disordered regions lie at residues 306–328 and 453–475; these read SRRR…PQKR and KGED…EAET. The span at 457–467 shows a compositional bias: acidic residues; that stretch reads SSVEEEGEIED.

The protein belongs to the AAA ATPase family. BCS1 subfamily. Mg(2+) is required as a cofactor. Expressed in developing shoots.

It is found in the membrane. The catalysed reaction is ATP + H2O = ADP + phosphate + H(+). This is AAA-ATPase At1g43910 from Arabidopsis thaliana (Mouse-ear cress).